The chain runs to 207 residues: 8-oxoguanine DNA glycosylase/AP lyase (207 aa).

Residues Lys128 and Asp146 contribute to the active site.

Belongs to the type-2 OGG1 family.

It catalyses the reaction 2'-deoxyribonucleotide-(2'-deoxyribose 5'-phosphate)-2'-deoxyribonucleotide-DNA = a 3'-end 2'-deoxyribonucleotide-(2,3-dehydro-2,3-deoxyribose 5'-phosphate)-DNA + a 5'-end 5'-phospho-2'-deoxyribonucleoside-DNA + H(+). Catalyzes the excision of an oxidatively damaged form of guanine (7,8-dihydro-8-oxoguanine = 8-oxoG) from DNA. Also cleaves the DNA backbone at apurinic/apyrimidinic sites (AP sites). The chain is 8-oxoguanine DNA glycosylase/AP lyase from Saccharolobus islandicus (strain Y.N.15.51 / Yellowstone #2) (Sulfolobus islandicus).